Here is a 405-residue protein sequence, read N- to C-terminus: Corticosteroid-binding globulin (405 aa).

A signal peptide spans 1 to 22 (MPLLLYTCLLWLPTSGLWTVQA). 3 N-linked (GlcNAc...) asparagine glycosylation sites follow: Asn-31, Asn-96, and Asn-176. Position 254 (Gln-254) interacts with cortisol. Asn-260 carries an N-linked (GlcNAc...) asparagine glycan. Asn-286 contributes to the cortisol binding site. N-linked (GlcNAc...) asparagine glycosylation is found at Asn-330 and Asn-369. Cortisol-binding residues include His-390 and Trp-393.

It belongs to the serpin family. N-glycosylated; binds 5 oligosaccharide chains. Post-translationally, glycosylation in position Asn-260 is needed for steroid binding. Plasma; synthesized in liver. Has also been identified in a number of glycocorticoid responsive cells.

Its subcellular location is the secreted. Its function is as follows. Major transport protein for glucocorticoids and progestins in the blood of almost all vertebrate species. This chain is Corticosteroid-binding globulin (SERPINA6), found in Homo sapiens (Human).